The following is a 356-amino-acid chain: INO80 complex subunit B (356 aa).

The interval 1-71 (MSKLWRRGST…PSPAKPQLKL (71 aa)) is disordered. A compositionally biased stretch (basic residues) spans 33–51 (HGVHKKKHKKHKKKHKKKH). A phosphoserine mark is found at S97, S99, S127, S130, and S132. The disordered stretch occupies residues 124 to 150 (DEDSNLSPSPLRDLSGGLGGQEEEEEQ). Residues 213–245 (LLKREERARKRRLQAARRAEEHKNQTIERLTKT) are a coiled coil. 2 disordered regions span residues 246–269 (AATSGRGGRGGARGERRGGRAAAP) and 286–310 (FPPGVPAPTAVSQRPSPSGPPPRCS). The HIT-type zinc-finger motif lies at 305 to 336 (PPPRCSVPGCPHPRRYACSRTGQALCSLQCYR).

As to quaternary structure, component of the chromatin remodeling INO80 complex; specifically part of a complex module associated with the helicase ATP-binding and the helicase C-terminal domain of INO80. Interacts with RP9.

The protein resides in the nucleus. Its subcellular location is the nucleolus. Its function is as follows. Induces growth and cell cycle arrests at the G1 phase of the cell cycle. Proposed core component of the chromatin remodeling INO80 complex which is involved in transcriptional regulation, DNA replication and probably DNA repair. This chain is INO80 complex subunit B (INO80B), found in Homo sapiens (Human).